Here is a 294-residue protein sequence, read N- to C-terminus: 4-hydroxy-tetrahydrodipicolinate synthase (294 aa).

Thr-47 serves as a coordination point for pyruvate. Tyr-135 (proton donor/acceptor) is an active-site residue. The active-site Schiff-base intermediate with substrate is Lys-163. Thr-205 provides a ligand contact to pyruvate.

Belongs to the DapA family. In terms of assembly, homotetramer; dimer of dimers.

It is found in the cytoplasm. It catalyses the reaction L-aspartate 4-semialdehyde + pyruvate = (2S,4S)-4-hydroxy-2,3,4,5-tetrahydrodipicolinate + H2O + H(+). The protein operates within amino-acid biosynthesis; L-lysine biosynthesis via DAP pathway; (S)-tetrahydrodipicolinate from L-aspartate: step 3/4. Its function is as follows. Catalyzes the condensation of (S)-aspartate-beta-semialdehyde [(S)-ASA] and pyruvate to 4-hydroxy-tetrahydrodipicolinate (HTPA). This Rickettsia conorii (strain ATCC VR-613 / Malish 7) protein is 4-hydroxy-tetrahydrodipicolinate synthase.